We begin with the raw amino-acid sequence, 808 residues long: DNA ligase (808 aa).

Residues 1–30 form a disordered region; it reads MSISDDISPVPPAPVSEPNAGQDAGQDAAP. Residues 18–30 show a composition bias toward low complexity; that stretch reads PNAGQDAGQDAAP. Residues 61 to 65, 110 to 111, and aspartate 141 contribute to the NAD(+) site; these read DAEYD and SL. Lysine 143 acts as the N6-AMP-lysine intermediate in catalysis. Residues arginine 164, glutamate 202, lysine 334, and lysine 358 each coordinate NAD(+). The Zn(2+) site is built by cysteine 453, cysteine 456, cysteine 471, and cysteine 476. The BRCT domain maps to 644-733; it reads EGSGPLAGLR…GGDVPEDGDG (90 aa). Positions 720-808 are disordered; that stretch reads LEGRGGDVPE…PRKKDQHSLL (89 aa). A compositionally biased stretch (acidic residues) spans 727–742; sequence VPEDGDGAPGNEDEAP. Over residues 746–773 the composition is skewed to low complexity; sequence ADVPAAPEVLADAPAAISADASSGVAPG. Positions 779–792 are enriched in basic and acidic residues; the sequence is DRADMTDRTVRTDS.

It belongs to the NAD-dependent DNA ligase family. LigA subfamily. The cofactor is Mg(2+). It depends on Mn(2+) as a cofactor.

The enzyme catalyses NAD(+) + (deoxyribonucleotide)n-3'-hydroxyl + 5'-phospho-(deoxyribonucleotide)m = (deoxyribonucleotide)n+m + AMP + beta-nicotinamide D-nucleotide.. Its function is as follows. DNA ligase that catalyzes the formation of phosphodiester linkages between 5'-phosphoryl and 3'-hydroxyl groups in double-stranded DNA using NAD as a coenzyme and as the energy source for the reaction. It is essential for DNA replication and repair of damaged DNA. This Nitratidesulfovibrio vulgaris (strain DSM 19637 / Miyazaki F) (Desulfovibrio vulgaris) protein is DNA ligase.